We begin with the raw amino-acid sequence, 299 residues long: CCR4-NOT transcription complex subunit 9 (299 aa).

M1 bears the N-acetylmethionine mark.

This sequence belongs to the CNOT9 family. In terms of assembly, homodimer. Component of the CCR4-NOT complex; distinct complexes seem to exist that differ in the participation of probably mutually exclusive catalytic subunits. Interacts with MYB, ATF2, RARA, RARB, RARG, RXRA, RXRB and RXRG. Identified in a complex with ATF2 bound to target DNA. Interacts with NANOS2. Directly interacts with ZNF335.

The protein resides in the nucleus. The protein localises to the cytoplasm. It localises to the P-body. Component of the CCR4-NOT complex which is one of the major cellular mRNA deadenylases and is linked to various cellular processes including bulk mRNA degradation, miRNA-mediated repression, translational repression during translational initiation and general transcription regulation. Additional complex functions may be a consequence of its influence on mRNA expression. Involved in down-regulation of MYB- and JUN-dependent transcription. Enhances ligand-dependent transcriptional activity of nuclear hormone receptors. May play a role in cell differentiation. The polypeptide is CCR4-NOT transcription complex subunit 9 (Bos taurus (Bovine)).